The primary structure comprises 397 residues: MGKEKFERKKPHVNIGTIGHIDHGKTTLTAAITKTAGLLGQGKFIAYDEIDKAPEEKERGITIATAHVEYETATRHYAHVDCPGHADYIKNMITGAAQMDGAIIVVAATDGPMPQTREHILLARQVGVPYIVVFLNKCDMVDDEELLELVELEVRELLTSYGFPGDDVPVVRGSALKALESDDPNSDACKPIRELLAACDSYIPEPQRDIDKPFLMPIEDVFSISGRGTVVTGRVERGVIKVGEEVEIVGIKDTTKSTCTGVEMFRKLLDQGQAGDNIGALLRGVKRDDVERGQVLAAPKSITPHRKFKAEVYVLSKEEGGRHTPFFSGYRPQFYFRTTDITGVITLEEGVEMVMPGDNATFNVELIAPIAMELGLRFAIREGGRTVGAGVVSEIVE.

Positions 10–207 (KPHVNIGTIG…ACDSYIPEPQ (198 aa)) constitute a tr-type G domain. The tract at residues 19 to 26 (GHIDHGKT) is G1. Position 19-26 (19-26 (GHIDHGKT)) interacts with GTP. Mg(2+) is bound at residue T26. Positions 60–64 (GITIA) are G2. The segment at 81–84 (DCPG) is G3. Residues 81 to 85 (DCPGH) and 136 to 139 (NKCD) each bind GTP. The interval 136-139 (NKCD) is G4. The G5 stretch occupies residues 174 to 176 (SAL).

This sequence belongs to the TRAFAC class translation factor GTPase superfamily. Classic translation factor GTPase family. EF-Tu/EF-1A subfamily. As to quaternary structure, monomer.

Its subcellular location is the cytoplasm. It catalyses the reaction GTP + H2O = GDP + phosphate + H(+). Functionally, GTP hydrolase that promotes the GTP-dependent binding of aminoacyl-tRNA to the A-site of ribosomes during protein biosynthesis. The polypeptide is Elongation factor Tu (Nitratidesulfovibrio vulgaris (strain ATCC 29579 / DSM 644 / CCUG 34227 / NCIMB 8303 / VKM B-1760 / Hildenborough) (Desulfovibrio vulgaris)).